The primary structure comprises 344 residues: GTPase Obg (344 aa).

The region spanning 1-159 (MKFLDQAKVY…RWIWLRLKLI (159 aa)) is the Obg domain. The OBG-type G domain maps to 160-327 (ADAGLVGLPN…ALRLLLSVVE (168 aa)). Residues 166 to 173 (GLPNAGKS), 191 to 195 (FTTLH), 212 to 215 (DIPG), 279 to 282 (SKVD), and 308 to 310 (SAQ) contribute to the GTP site. The Mg(2+) site is built by S173 and T193.

This sequence belongs to the TRAFAC class OBG-HflX-like GTPase superfamily. OBG GTPase family. Monomer. Requires Mg(2+) as cofactor.

The protein resides in the cytoplasm. In terms of biological role, an essential GTPase which binds GTP, GDP and possibly (p)ppGpp with moderate affinity, with high nucleotide exchange rates and a fairly low GTP hydrolysis rate. Plays a role in control of the cell cycle, stress response, ribosome biogenesis and in those bacteria that undergo differentiation, in morphogenesis control. The protein is GTPase Obg of Xanthobacter autotrophicus (strain ATCC BAA-1158 / Py2).